We begin with the raw amino-acid sequence, 73 residues long: UPF0346 protein Lreu_0775 (73 aa).

The protein belongs to the UPF0346 family.

This chain is UPF0346 protein Lreu_0775, found in Limosilactobacillus reuteri (strain DSM 20016) (Lactobacillus reuteri).